Consider the following 416-residue polypeptide: Serine hydroxymethyltransferase (416 aa).

Residues L121 and G125–L127 each bind (6S)-5,6,7,8-tetrahydrofolate. Residue K230 is modified to N6-(pyridoxal phosphate)lysine. A (6S)-5,6,7,8-tetrahydrofolate-binding site is contributed by S354–F356.

Belongs to the SHMT family. Homodimer. Pyridoxal 5'-phosphate serves as cofactor.

It is found in the cytoplasm. The catalysed reaction is (6R)-5,10-methylene-5,6,7,8-tetrahydrofolate + glycine + H2O = (6S)-5,6,7,8-tetrahydrofolate + L-serine. It functions in the pathway one-carbon metabolism; tetrahydrofolate interconversion. Its pathway is amino-acid biosynthesis; glycine biosynthesis; glycine from L-serine: step 1/1. Catalyzes the reversible interconversion of serine and glycine with tetrahydrofolate (THF) serving as the one-carbon carrier. This reaction serves as the major source of one-carbon groups required for the biosynthesis of purines, thymidylate, methionine, and other important biomolecules. Also exhibits THF-independent aldolase activity toward beta-hydroxyamino acids, producing glycine and aldehydes, via a retro-aldol mechanism. This Prochlorococcus marinus (strain MIT 9211) protein is Serine hydroxymethyltransferase.